We begin with the raw amino-acid sequence, 230 residues long: Complex I assembly factor TMEM126B, mitochondrial (230 aa).

4 helical membrane passes run 70–92, 107–126, 139–161, and 196–218; these read LNIHGTLVFGTSSSLSGIMANLV, YASLTTLPVLATIVSYKLFV, SCVLRSALIGMACGVSYPSALAF, and AMAIPLFFQIVMGAFTGLHHYNI.

Belongs to the TMEM126 family. In terms of assembly, part of the mitochondrial complex I assembly/MCIA complex that comprises at least the core subunits TMEM126B, NDUFAF1, ECSIT and ACAD9 and complement subunits such as COA1 and TMEM186. Associates with the intermediate 370 kDa subcomplex of incompletely assembled complex I. Interacts with TMEM70.

Its subcellular location is the mitochondrion membrane. Its function is as follows. As part of the MCIA complex, involved in the assembly of the mitochondrial complex I. Participates in constructing the membrane arm of complex I. This is Complex I assembly factor TMEM126B, mitochondrial from Mus musculus (Mouse).